A 126-amino-acid chain; its full sequence is Large ribosomal subunit protein bL17 (126 aa).

The protein belongs to the bacterial ribosomal protein bL17 family. As to quaternary structure, part of the 50S ribosomal subunit. Contacts protein L32.

This Xylella fastidiosa (strain M12) protein is Large ribosomal subunit protein bL17.